The sequence spans 147 residues: Large ribosomal subunit protein uL15 (147 aa).

Residues 1-28 (MIRRRKKVRKLRGSHTHGWGCKKKHRGG) are compositionally biased toward basic residues. Residues 1–43 (MIRRRKKVRKLRGSHTHGWGCKKKHRGGGSKGGRGMAGTGKRN) form a disordered region. The segment covering 29–38 (GSKGGRGMAG) has biased composition (gly residues).

The protein belongs to the universal ribosomal protein uL15 family. Part of the 50S ribosomal subunit.

Binds to the 23S rRNA. The protein is Large ribosomal subunit protein uL15 of Pyrococcus abyssi (strain GE5 / Orsay).